Consider the following 115-residue polypeptide: Large ribosomal subunit protein uL18 (115 aa).

The tract at residues 1-20 is disordered; it reads MKYTKQEARKRRHYRVRSKV. Residues 8-18 show a composition bias toward basic residues; the sequence is ARKRRHYRVRS.

The protein belongs to the universal ribosomal protein uL18 family. As to quaternary structure, part of the 50S ribosomal subunit; part of the 5S rRNA/L5/L18/L25 subcomplex. Contacts the 5S and 23S rRNAs.

This is one of the proteins that bind and probably mediate the attachment of the 5S RNA into the large ribosomal subunit, where it forms part of the central protuberance. This is Large ribosomal subunit protein uL18 from Mesoplasma florum (strain ATCC 33453 / NBRC 100688 / NCTC 11704 / L1) (Acholeplasma florum).